The primary structure comprises 344 residues: Holliday junction branch migration complex subunit RuvB (344 aa).

Residues 4 to 184 are large ATPase domain (RuvB-L); that stretch reads QDRIIDANAK…FGIVQRLEFY (181 aa). ATP contacts are provided by residues Arg-24, Gly-65, Lys-68, Thr-69, Thr-70, 131-133, Arg-174, Tyr-184, and Arg-221; that span reads EDF. A Mg(2+)-binding site is contributed by Thr-69. The interval 185–255 is small ATPAse domain (RuvB-S); it reads NIEDLTHIVE…IADLALNMLN (71 aa). The segment at 258-344 is head domain (RuvB-H); that stretch reads EHGFDHMDRR…ALKQDSLPGI (87 aa). The DNA site is built by Arg-294, Arg-313, and Arg-318.

This sequence belongs to the RuvB family. As to quaternary structure, homohexamer. Forms an RuvA(8)-RuvB(12)-Holliday junction (HJ) complex. HJ DNA is sandwiched between 2 RuvA tetramers; dsDNA enters through RuvA and exits via RuvB. An RuvB hexamer assembles on each DNA strand where it exits the tetramer. Each RuvB hexamer is contacted by two RuvA subunits (via domain III) on 2 adjacent RuvB subunits; this complex drives branch migration. In the full resolvosome a probable DNA-RuvA(4)-RuvB(12)-RuvC(2) complex forms which resolves the HJ.

Its subcellular location is the cytoplasm. The catalysed reaction is ATP + H2O = ADP + phosphate + H(+). Functionally, the RuvA-RuvB-RuvC complex processes Holliday junction (HJ) DNA during genetic recombination and DNA repair, while the RuvA-RuvB complex plays an important role in the rescue of blocked DNA replication forks via replication fork reversal (RFR). RuvA specifically binds to HJ cruciform DNA, conferring on it an open structure. The RuvB hexamer acts as an ATP-dependent pump, pulling dsDNA into and through the RuvAB complex. RuvB forms 2 homohexamers on either side of HJ DNA bound by 1 or 2 RuvA tetramers; 4 subunits per hexamer contact DNA at a time. Coordinated motions by a converter formed by DNA-disengaged RuvB subunits stimulates ATP hydrolysis and nucleotide exchange. Immobilization of the converter enables RuvB to convert the ATP-contained energy into a lever motion, pulling 2 nucleotides of DNA out of the RuvA tetramer per ATP hydrolyzed, thus driving DNA branch migration. The RuvB motors rotate together with the DNA substrate, which together with the progressing nucleotide cycle form the mechanistic basis for DNA recombination by continuous HJ branch migration. Branch migration allows RuvC to scan DNA until it finds its consensus sequence, where it cleaves and resolves cruciform DNA. The polypeptide is Holliday junction branch migration complex subunit RuvB (Saccharophagus degradans (strain 2-40 / ATCC 43961 / DSM 17024)).